The following is a 127-amino-acid chain: uncharacterized protein (127 aa).

Helical transmembrane passes span 1–21 (MYIIMGVFTTIVNIASFYILV), 32–52 (TVAAWILSVLFAYITNKLYVF), 68–88 (AFFSVRVLSLGIDLGMMIILV), and 100–120 (ILDNAVIVVVNYVASKWLVFK).

This sequence belongs to the GtrA family.

Its subcellular location is the cell membrane. This is an uncharacterized protein from Bacillus subtilis (strain 168).